A 174-amino-acid chain; its full sequence is Crossover junction endodeoxyribonuclease RuvC (174 aa).

Active-site residues include Asp-8, Glu-67, and Asp-139. Mg(2+) contacts are provided by Asp-8, Glu-67, and Asp-139.

This sequence belongs to the RuvC family. As to quaternary structure, homodimer which binds Holliday junction (HJ) DNA. The HJ becomes 2-fold symmetrical on binding to RuvC with unstacked arms; it has a different conformation from HJ DNA in complex with RuvA. In the full resolvosome a probable DNA-RuvA(4)-RuvB(12)-RuvC(2) complex forms which resolves the HJ. Mg(2+) serves as cofactor.

Its subcellular location is the cytoplasm. It catalyses the reaction Endonucleolytic cleavage at a junction such as a reciprocal single-stranded crossover between two homologous DNA duplexes (Holliday junction).. Functionally, the RuvA-RuvB-RuvC complex processes Holliday junction (HJ) DNA during genetic recombination and DNA repair. Endonuclease that resolves HJ intermediates. Cleaves cruciform DNA by making single-stranded nicks across the HJ at symmetrical positions within the homologous arms, yielding a 5'-phosphate and a 3'-hydroxyl group; requires a central core of homology in the junction. The consensus cleavage sequence is 5'-(A/T)TT(C/G)-3'. Cleavage occurs on the 3'-side of the TT dinucleotide at the point of strand exchange. HJ branch migration catalyzed by RuvA-RuvB allows RuvC to scan DNA until it finds its consensus sequence, where it cleaves and resolves the cruciform DNA. The protein is Crossover junction endodeoxyribonuclease RuvC of Pseudomonas entomophila (strain L48).